Here is a 989-residue protein sequence, read N- to C-terminus: Frequency clock protein (989 aa).

3 disordered regions span residues 1–139 (MADS…PGFR), 208–290 (FAAS…VGTQ), and 331–445 (ISGR…PDRV). Over residues 36–45 (ENHRLARDTS) the composition is skewed to basic and acidic residues. Positions 46 to 88 (SRVTSSSALGVTESQPQLKSSPTRRNSSGESEPTNWFNQSNRN) are enriched in polar residues. Positions 109–119 (KETDSSNEESR) are enriched in basic and acidic residues. Residues 233 to 255 (HSSGVSLSKHDSSSSSRSRPVDS) show a composition bias toward low complexity. Polar residues-rich tracts occupy residues 256-274 (AYNSMSTGRSSHAPHSSGP) and 334-343 (RNMQRNQSMP). A compositionally biased stretch (basic and acidic residues) spans 377–386 (DNPRKNRSSK). Polar residues predominate over residues 387 to 397 (DNGSASNSGGD). The span at 402–418 (GGTGTGSGDGSGSGGRT) shows a compositional bias: gly residues. Over residues 433–444 (RPTRPRDLDPDR) the composition is skewed to basic and acidic residues. T501 bears the Phosphothreonine mark. 2 positions are modified to phosphoserine: S513 and S519. 3 disordered regions span residues 524-642 (KIRW…QRRK), 865-907 (WDDG…TYMR), and 968-989 (SVATAGGAESGYSSSMEDVSSS). The Nuclear localization signal motif lies at 564-568 (RKKRK). Positions 598–615 (RNSSSIETSLEESMSQGS) are enriched in polar residues. The segment covering 865–886 (WDDGDDLASDDEEVEEVEEDSY) has biased composition (acidic residues). A compositionally biased stretch (polar residues) spans 978–989 (GYSSSMEDVSSS).

This sequence belongs to the FRQ family. Post-translationally, progressive phosphorylation during the late circadian day and early night. Phosphorylation is also involved in regulating frq degradation. Phosphorylation by CKII may have at least three functions; it decreases the stability of frq, reduces the protein complex formation between frq and the white collar proteins, and is important for the closing of the Neurospora circadian negative feedback loop.

Its subcellular location is the nucleus. In terms of biological role, circadian clock component involved in the generation of biological rhythms, in particular in rhythm stability, period length, and temperature compensation. Oscillates in abundance with a daily peak early in the morning. Behaves as a negative element in circadian transcriptional loop. May bind to wc-2 protein. The complex frq-wc-2 may turn off the expression of frq. In Neurospora crassa (strain ATCC 24698 / 74-OR23-1A / CBS 708.71 / DSM 1257 / FGSC 987), this protein is Frequency clock protein (frq).